The following is a 691-amino-acid chain: T-box transcription factor TBX2-B (691 aa).

Residues 104 to 277 (LWDQFHKIGT…HNPFAKGFRD (174 aa)) constitute a DNA-binding region (T-box). 2 disordered regions span residues 301-440 (CKAD…SLSK) and 612-691 (NLLT…ESPK). The segment covering 325-335 (HSPLSAAPSPL) has biased composition (low complexity). 3 stretches are compositionally biased toward basic and acidic residues: residues 340–361 (TNRE…EVRS), 378–402 (RLED…RKDG), and 415–433 (SLEK…KSDP). The span at 624-639 (PGSESSKPGSSRESSP) shows a compositional bias: low complexity. Positions 659 to 684 (SMKDSINELQRIQRLVSGLERQREVS) form a coiled coil. Residues 678–691 (ERQREVSPGRESPK) show a composition bias toward basic and acidic residues.

Binds DNA as a monomer.

The protein localises to the nucleus. Its function is as follows. Transcription factor which acts as a transcriptional repressor. May also function as a transcriptional activator. Binds to the palindromic T site 5'-TTCACACCTAGGTGTGAA-3' DNA sequence, or a half-site, which are present in the regulatory region of several genes. This Xenopus laevis (African clawed frog) protein is T-box transcription factor TBX2-B (tbx2-b).